A 148-amino-acid chain; its full sequence is Large ribosomal subunit protein uL15 (148 aa).

Residues 1-51 (MNLSNLKPAEGSTKTRKRIGRGAGSGLGGTSTRGHKGAKSRSGYSKKVGFE) form a disordered region. A compositionally biased stretch (gly residues) spans 21 to 31 (RGAGSGLGGTS).

Belongs to the universal ribosomal protein uL15 family. In terms of assembly, part of the 50S ribosomal subunit.

Binds to the 23S rRNA. This Bacteroides thetaiotaomicron (strain ATCC 29148 / DSM 2079 / JCM 5827 / CCUG 10774 / NCTC 10582 / VPI-5482 / E50) protein is Large ribosomal subunit protein uL15.